Here is a 169-residue protein sequence, read N- to C-terminus: ATP synthase subunit b (169 aa).

A helical transmembrane segment spans residues 12 to 32 (HIYLGNALWYLICFAILLLLI).

The protein belongs to the ATPase B chain family. In terms of assembly, F-type ATPases have 2 components, F(1) - the catalytic core - and F(0) - the membrane proton channel. F(1) has five subunits: alpha(3), beta(3), gamma(1), delta(1), epsilon(1). F(0) has three main subunits: a(1), b(2) and c(10-14). The alpha and beta chains form an alternating ring which encloses part of the gamma chain. F(1) is attached to F(0) by a central stalk formed by the gamma and epsilon chains, while a peripheral stalk is formed by the delta and b chains.

It is found in the cell membrane. Its function is as follows. F(1)F(0) ATP synthase produces ATP from ADP in the presence of a proton or sodium gradient. F-type ATPases consist of two structural domains, F(1) containing the extramembraneous catalytic core and F(0) containing the membrane proton channel, linked together by a central stalk and a peripheral stalk. During catalysis, ATP synthesis in the catalytic domain of F(1) is coupled via a rotary mechanism of the central stalk subunits to proton translocation. Functionally, component of the F(0) channel, it forms part of the peripheral stalk, linking F(1) to F(0). The chain is ATP synthase subunit b from Lactobacillus helveticus (strain DPC 4571).